Reading from the N-terminus, the 254-residue chain is Imidazole glycerol phosphate synthase subunit HisF (254 aa).

Catalysis depends on residues Asp-11 and Asp-130.

This sequence belongs to the HisA/HisF family. As to quaternary structure, heterodimer of HisH and HisF.

Its subcellular location is the cytoplasm. The catalysed reaction is 5-[(5-phospho-1-deoxy-D-ribulos-1-ylimino)methylamino]-1-(5-phospho-beta-D-ribosyl)imidazole-4-carboxamide + L-glutamine = D-erythro-1-(imidazol-4-yl)glycerol 3-phosphate + 5-amino-1-(5-phospho-beta-D-ribosyl)imidazole-4-carboxamide + L-glutamate + H(+). It functions in the pathway amino-acid biosynthesis; L-histidine biosynthesis; L-histidine from 5-phospho-alpha-D-ribose 1-diphosphate: step 5/9. In terms of biological role, IGPS catalyzes the conversion of PRFAR and glutamine to IGP, AICAR and glutamate. The HisF subunit catalyzes the cyclization activity that produces IGP and AICAR from PRFAR using the ammonia provided by the HisH subunit. This Halorhodospira halophila (strain DSM 244 / SL1) (Ectothiorhodospira halophila (strain DSM 244 / SL1)) protein is Imidazole glycerol phosphate synthase subunit HisF.